The primary structure comprises 473 residues: tRNA-2-methylthio-N(6)-dimethylallyladenosine synthase (473 aa).

The MTTase N-terminal domain occupies R5–A125. [4Fe-4S] cluster-binding residues include C14, C50, C88, C166, C170, and C173. One can recognise a Radical SAM core domain in the interval R152–A384. The TRAM domain occupies R387 to S449. Low complexity predominate over residues S453–P462. Residues S453–V473 form a disordered region.

This sequence belongs to the methylthiotransferase family. MiaB subfamily. Monomer. It depends on [4Fe-4S] cluster as a cofactor.

It localises to the cytoplasm. It catalyses the reaction N(6)-dimethylallyladenosine(37) in tRNA + (sulfur carrier)-SH + AH2 + 2 S-adenosyl-L-methionine = 2-methylsulfanyl-N(6)-dimethylallyladenosine(37) in tRNA + (sulfur carrier)-H + 5'-deoxyadenosine + L-methionine + A + S-adenosyl-L-homocysteine + 2 H(+). Functionally, catalyzes the methylthiolation of N6-(dimethylallyl)adenosine (i(6)A), leading to the formation of 2-methylthio-N6-(dimethylallyl)adenosine (ms(2)i(6)A) at position 37 in tRNAs that read codons beginning with uridine. This is tRNA-2-methylthio-N(6)-dimethylallyladenosine synthase from Nitrobacter hamburgensis (strain DSM 10229 / NCIMB 13809 / X14).